Consider the following 180-residue polypeptide: Probable Brix domain-containing ribosomal biogenesis protein (180 aa).

The 178-residue stretch at 1–178 folds into the Brix domain; it reads MTTSRRPSPR…KPAEMVKRGR (178 aa).

Probably involved in the biogenesis of the ribosome. The sequence is that of Probable Brix domain-containing ribosomal biogenesis protein from Aeropyrum pernix (strain ATCC 700893 / DSM 11879 / JCM 9820 / NBRC 100138 / K1).